A 343-amino-acid polypeptide reads, in one-letter code: Protein RecA (343 aa).

65 to 72 (GPESSGKT) contacts ATP.

It belongs to the RecA family.

Its subcellular location is the cytoplasm. Can catalyze the hydrolysis of ATP in the presence of single-stranded DNA, the ATP-dependent uptake of single-stranded DNA by duplex DNA, and the ATP-dependent hybridization of homologous single-stranded DNAs. It interacts with LexA causing its activation and leading to its autocatalytic cleavage. This is Protein RecA from Campylobacter jejuni subsp. doylei (strain ATCC BAA-1458 / RM4099 / 269.97).